The chain runs to 275 residues: Uroplakin-3b (275 aa).

A signal peptide spans 1-26 (MVRTRWQPPLRALLLLVLVWLPQSLS). At 27–196 (LDLIAYVPQI…DTWPGRRSGC (170 aa)) the chain is on the lumenal side. The N-linked (GlcNAc...) asparagine glycan is linked to Asn-77. The helical transmembrane segment at 197 to 217 (MIVITSILSALAGLLLLAFLA) threads the bilayer. Residues 218–275 (ASTTRFSSLWWPEEAPEQLRIGSFMGKRYMTHHIPPSEAATLPVGCEPGLDPLPSLSP) are Cytoplasmic-facing.

It belongs to the uroplakin-3 family. Heterodimer with uroplakin-1B (UPK1B). In terms of tissue distribution, expression is urothelium-specific.

The protein resides in the cell membrane. Component of the asymmetric unit membrane (AUM); a highly specialized biomembrane elaborated by terminally differentiated urothelial cells. May play an important role in AUM-cytoskeleton interaction in terminally differentiated urothelial cells. It also contributes to the formation of urothelial glycocalyx which may play an important role in preventing bacterial adherence. This Mus musculus (Mouse) protein is Uroplakin-3b (Upk3b).